Consider the following 212-residue polypeptide: Peptide methionine sulfoxide reductase MsrA (212 aa).

Cysteine 52 is an active-site residue.

The protein belongs to the MsrA Met sulfoxide reductase family.

The enzyme catalyses L-methionyl-[protein] + [thioredoxin]-disulfide + H2O = L-methionyl-(S)-S-oxide-[protein] + [thioredoxin]-dithiol. It catalyses the reaction [thioredoxin]-disulfide + L-methionine + H2O = L-methionine (S)-S-oxide + [thioredoxin]-dithiol. Its function is as follows. Has an important function as a repair enzyme for proteins that have been inactivated by oxidation. Catalyzes the reversible oxidation-reduction of methionine sulfoxide in proteins to methionine. The polypeptide is Peptide methionine sulfoxide reductase MsrA (Shigella boydii serotype 18 (strain CDC 3083-94 / BS512)).